The sequence spans 397 residues: Acetate kinase (397 aa).

Mg(2+) is bound at residue Asn-8. Lys-15 provides a ligand contact to ATP. Arg-90 is a substrate binding site. The active-site Proton donor/acceptor is Asp-147. An ATP-binding site is contributed by 207–211 (HLGAG). Glu-382 provides a ligand contact to Mg(2+).

It belongs to the acetokinase family. Homodimer. Requires Mg(2+) as cofactor. Mn(2+) is required as a cofactor.

The protein resides in the cytoplasm. The enzyme catalyses acetate + ATP = acetyl phosphate + ADP. It participates in metabolic intermediate biosynthesis; acetyl-CoA biosynthesis; acetyl-CoA from acetate: step 1/2. Functionally, catalyzes the formation of acetyl phosphate from acetate and ATP. Can also catalyze the reverse reaction. In Lactiplantibacillus plantarum (strain ATCC BAA-793 / NCIMB 8826 / WCFS1) (Lactobacillus plantarum), this protein is Acetate kinase.